Consider the following 288-residue polypeptide: Protease HtpX (288 aa).

2 consecutive transmembrane segments (helical) span residues V4–I24 and L36–M56. Position 143 (H143) interacts with Zn(2+). E144 is a catalytic residue. Zn(2+) is bound at residue H147. A run of 2 helical transmembrane segments spans residues G151–S171 and M193–I213. E222 provides a ligand contact to Zn(2+).

It belongs to the peptidase M48B family. Zn(2+) is required as a cofactor.

Its subcellular location is the cell inner membrane. The sequence is that of Protease HtpX from Vibrio vulnificus (strain YJ016).